A 294-amino-acid chain; its full sequence is Undecaprenyl-diphosphatase (294 aa).

6 consecutive transmembrane segments (helical) span residues 39 to 59, 93 to 113, 123 to 143, 198 to 218, 232 to 252, and 268 to 288; these read PGAAFTAIIQIGTELAVILYF, ATLGWNIIVGSIPIVILGFTL, NLWITVTVLLVFGVLLWVVDA, SFLMAIPAVFGSGLLETVKAV, PTLVAMVISFVLGYIVIIGFL, and IGLAVVVALLLIVGVLPAIDP.

This sequence belongs to the UppP family.

The protein resides in the cell membrane. The enzyme catalyses di-trans,octa-cis-undecaprenyl diphosphate + H2O = di-trans,octa-cis-undecaprenyl phosphate + phosphate + H(+). Catalyzes the dephosphorylation of undecaprenyl diphosphate (UPP). Confers resistance to bacitracin. The chain is Undecaprenyl-diphosphatase from Bifidobacterium longum subsp. infantis (strain ATCC 15697 / DSM 20088 / JCM 1222 / NCTC 11817 / S12).